A 321-amino-acid polypeptide reads, in one-letter code: Meiotic drive suppressor wtf26 (321 aa).

Residues 29-68 form a disordered region; the sequence is GLLPEYNSEEEGALPTYSDHARSSNPPNTHRENHSSGTTD. Transmembrane regions (helical) follow at residues 73–93, 110–130, 151–171, 188–208, 210–230, and 243–263; these read FLIK…LAVC, WTLF…LTYF, EMMI…FGCV, TISA…WTLW, ALSG…LVNG, and GYEI…LYEM.

The protein belongs to the WTF family. Homomer. Interacts with other proteins that exhibit high sequence similarity.

It localises to the spore membrane. The protein resides in the vacuole membrane. Acts as a suppressor component of the dual wtf meiotic drive system, and can suppress but not confer meiotic drive by compatible poisons. Wtf meiotic drive systems promote unequal transmission of alleles from the parental zygote to progeny spores by encoding a poison and an antidote from the same locus; the poison is trans-acting and forms toxic aggregates in all spores within an ascus, wherease the antidote is spore-specific and targets aggregates for degradation by the vacuole. Meiotic drive by wtf systems therefore lead to poisoning of all progeny that do not inherit the dual poison/antidote allele, or express a compatible antidote. The polypeptide is Meiotic drive suppressor wtf26 (Schizosaccharomyces kambucha (Fission yeast)).